The sequence spans 122 residues: Large ribosomal subunit protein uL14 (122 aa).

The protein belongs to the universal ribosomal protein uL14 family. In terms of assembly, part of the 50S ribosomal subunit. Forms a cluster with proteins L3 and L19. In the 70S ribosome, L14 and L19 interact and together make contacts with the 16S rRNA in bridges B5 and B8.

In terms of biological role, binds to 23S rRNA. Forms part of two intersubunit bridges in the 70S ribosome. The protein is Large ribosomal subunit protein uL14 of Pseudomonas entomophila (strain L48).